We begin with the raw amino-acid sequence, 607 residues long: Pescadillo homolog (607 aa).

Positions 301-341 are disordered; the sequence is ANVVEQSEKTTEDADEEPETEENLDEFKPADGADNEDSKSL. Acidic residues predominate over residues 313–324; it reads DADEEPETEENL. Residues 325 to 339 are compositionally biased toward basic and acidic residues; it reads DEFKPADGADNEDSK. A BRCT domain is found at 348–441; sequence SNTSLFSNFT…ILERTDLYAC (94 aa). A coiled-coil region spans residues 497–604; that stretch reads ENVEQIDDAE…RDIEKRKKLK (108 aa). The interval 531–607 is disordered; sequence QNSKSAKKTK…EKRKKLKVEN (77 aa). Composition is skewed to basic and acidic residues over residues 544-561 and 595-607; these read RDTL…KELS and RDIE…KVEN.

Belongs to the pescadillo family. Component of the NOP7 complex, composed of erb1/SPBC4F6.13c, ppp1/SPBC19F5.05c and ytm1/SPAC890.04c. Within the NOP7 complex erb1/SPBC4F6.13c appears to interact directly with ppp1/SPBC19F5.05c and ytm1/SPAC890.04c. The NOP7 complex also associates with the 66S pre-ribosome.

Its subcellular location is the nucleus. The protein resides in the nucleoplasm. The protein localises to the nucleolus. Component of the NOP7 complex, which is required for maturation of the 25S and 5.8S ribosomal RNAs and formation of the 60S ribosome. The chain is Pescadillo homolog (ppp1) from Schizosaccharomyces pombe (strain 972 / ATCC 24843) (Fission yeast).